Reading from the N-terminus, the 532-residue chain is Phosphoenolpyruvate carboxykinase (ATP) (532 aa).

R60, Y194, and K200 together coordinate substrate. ATP-binding positions include K200, H219, and 237–245 (GLSGTGKTT). 2 residues coordinate Mn(2+): K200 and H219. Residue D258 coordinates Mn(2+). 3 residues coordinate ATP: E286, R324, and T449. Substrate is bound at residue R324.

This sequence belongs to the phosphoenolpyruvate carboxykinase (ATP) family. The cofactor is Mn(2+).

The protein resides in the cytoplasm. It catalyses the reaction oxaloacetate + ATP = phosphoenolpyruvate + ADP + CO2. The protein operates within carbohydrate biosynthesis; gluconeogenesis. Involved in the gluconeogenesis. Catalyzes the conversion of oxaloacetate (OAA) to phosphoenolpyruvate (PEP) through direct phosphoryl transfer between the nucleoside triphosphate and OAA. This is Phosphoenolpyruvate carboxykinase (ATP) from Cereibacter sphaeroides (strain ATCC 17029 / ATH 2.4.9) (Rhodobacter sphaeroides).